Here is a 723-residue protein sequence, read N- to C-terminus: Fatty acid oxidation complex subunit alpha (723 aa).

Residues methionine 1 to aspartate 189 are enoyl-CoA hydratase/isomerase. Aspartate 296 contacts substrate. A 3-hydroxyacyl-CoA dehydrogenase region spans residues serine 311–leucine 723. NAD(+) contacts are provided by residues methionine 325, aspartate 344, valine 401–glutamate 403, lysine 408, and serine 430. Histidine 451 serves as the catalytic For 3-hydroxyacyl-CoA dehydrogenase activity. Residue asparagine 454 participates in NAD(+) binding. Substrate is bound by residues asparagine 501 and tyrosine 661.

The protein in the N-terminal section; belongs to the enoyl-CoA hydratase/isomerase family. It in the C-terminal section; belongs to the 3-hydroxyacyl-CoA dehydrogenase family. In terms of assembly, heterotetramer of two alpha chains (FadB) and two beta chains (FadA).

The enzyme catalyses a (3S)-3-hydroxyacyl-CoA + NAD(+) = a 3-oxoacyl-CoA + NADH + H(+). The catalysed reaction is a (3S)-3-hydroxyacyl-CoA = a (2E)-enoyl-CoA + H2O. It carries out the reaction a 4-saturated-(3S)-3-hydroxyacyl-CoA = a (3E)-enoyl-CoA + H2O. It catalyses the reaction (3S)-3-hydroxybutanoyl-CoA = (3R)-3-hydroxybutanoyl-CoA. The enzyme catalyses a (3Z)-enoyl-CoA = a 4-saturated (2E)-enoyl-CoA. The catalysed reaction is a (3E)-enoyl-CoA = a 4-saturated (2E)-enoyl-CoA. It participates in lipid metabolism; fatty acid beta-oxidation. In terms of biological role, involved in the aerobic and anaerobic degradation of long-chain fatty acids via beta-oxidation cycle. Catalyzes the formation of 3-oxoacyl-CoA from enoyl-CoA via L-3-hydroxyacyl-CoA. It can also use D-3-hydroxyacyl-CoA and cis-3-enoyl-CoA as substrate. This is Fatty acid oxidation complex subunit alpha from Vibrio cholerae serotype O1 (strain ATCC 39315 / El Tor Inaba N16961).